Reading from the N-terminus, the 1307-residue chain is Light-sensor Protein kinase (1307 aa).

Residues 215–394 (DIELLCDTIV…VFGMQLNLHV (180 aa)) form the GAF domain. Cys320 serves as a coordination point for phytochromobilin. The region spanning 609–680 (LANEMSRVLE…RLLSLALQGE (72 aa)) is the PAS domain. The region spanning 683–739 (QNVEIKLKTFGTQTTERAVILIVNACCSRDASDFVVGVFFVGQDVTEQRMFMDRFTR) is the PAC domain. Positions 779–1003 (DHATGSVERL…WSFSEKFFQW (225 aa)) are hinge. In terms of domain architecture, Protein kinase spans 1004 to 1307 (IQITGSLGSG…DSYPSTEEPS (304 aa)). ATP-binding positions include 1010 to 1018 (LGSGSSATV) and Lys1031. Asp1127 is an active-site residue.

It in the N-terminal section; belongs to the phytochrome family. This sequence in the C-terminal section; belongs to the protein kinase superfamily. Ser/Thr protein kinase family. In terms of assembly, homodimer. Contains one covalently linked phytochromobilin chromophore.

Its subcellular location is the cell membrane. It carries out the reaction L-seryl-[protein] + ATP = O-phospho-L-seryl-[protein] + ADP + H(+). The enzyme catalyses L-threonyl-[protein] + ATP = O-phospho-L-threonyl-[protein] + ADP + H(+). Functionally, regulatory photoreceptor which exists in two forms that are reversibly interconvertible by light: the Pr form that absorbs maximally in the red region of the spectrum and the Pfr form that absorbs maximally in the far-red region. Photoconversion of Pr to Pfr induces an array of morphogenic responses, whereas reconversion of Pfr to Pr cancels the induction of those responses. Pfr controls the expression of a number of nuclear genes including those encoding the small subunit of ribulose-bisphosphate carboxylase, chlorophyll A/B binding protein, protochlorophyllide reductase, rRNA, etc. It also controls the expression of its own gene(s) in a negative feedback fashion. The sequence is that of Light-sensor Protein kinase (PHY1) from Ceratodon purpureus (Fire moss).